Here is a 116-residue protein sequence, read N- to C-terminus: MESSRVRLLPLLGAALLLMLPLLGTRAQEDAELQPRALDIYSAVDDASHEKELIEALQEVLKKLKSKRVPIYEKKYGQVPMCDAGEQCAVRKGARIGKLCDCPRGTSCNSFLLKCL.

The N-terminal stretch at 1-27 is a signal peptide; sequence MESSRVRLLPLLGAALLLMLPLLGTRA. Tyr41 carries the phosphotyrosine modification. Ser48 is subject to Phosphoserine. Intrachain disulfides connect Cys82-Cys100, Cys88-Cys108, and Cys102-Cys115.

The protein belongs to the CART family. In terms of tissue distribution, hypothalamus. Found in neurons of the ventrolateral part of the arcuate nucleus, in the external zone of the median eminence, and also found in terminals in the periventricular part of the paraventricular nucleus.

It is found in the secreted. In terms of biological role, satiety factor closely associated with the actions of leptin and neuropeptide Y; this anorectic peptide inhibits both normal and starvation-induced feeding and completely blocks the feeding response induced by neuropeptide Y and regulated by leptin in the hypothalamus. It promotes neuronal development and survival in vitro. The polypeptide is Cocaine- and amphetamine-regulated transcript protein (CARTPT) (Homo sapiens (Human)).